Reading from the N-terminus, the 255-residue chain is Homeobox protein Hox-D4 (255 aa).

Positions 31–128 are disordered; the sequence is EQGADYYGGG…KQPPPGTALK (98 aa). Residues 94-109 show a composition bias toward pro residues; it reads EPCPAPPAPPPAPLPG. The short motif at 133-138 is the Antp-type hexapeptide element; that stretch reads VYPWMK. The segment at residues 154–213 is a DNA-binding region (homeobox); sequence PKRSRTAYTRQQVLELEKEFHFNRYLTRRRRIEIAHTLCLSERQIKIWFQNRRMKWKKDH. The tract at residues 212–255 is disordered; that stretch reads DHKLPNTKGRSSSSSSSSSCSSSVAPSQHLQPMAKDHHTDLTTL. The segment covering 222-234 has biased composition (low complexity); the sequence is SSSSSSSSSCSSS. Residues 245 to 255 show a composition bias toward basic and acidic residues; the sequence is AKDHHTDLTTL.

This sequence belongs to the Antp homeobox family. Deformed subfamily. As to quaternary structure, forms a DNA-binding heterodimer with transcription factor PBX1.

Its subcellular location is the nucleus. Its function is as follows. Sequence-specific transcription factor which is part of a developmental regulatory system that provides cells with specific positional identities on the anterior-posterior axis. The chain is Homeobox protein Hox-D4 (HOXD4) from Gorilla gorilla gorilla (Western lowland gorilla).